The primary structure comprises 70 residues: DNA-directed RNA polymerase subunit omega (70 aa).

The protein belongs to the RNA polymerase subunit omega family. The RNAP catalytic core consists of 2 alpha, 1 beta, 1 beta' and 1 omega subunit. When a sigma factor is associated with the core the holoenzyme is formed, which can initiate transcription.

It catalyses the reaction RNA(n) + a ribonucleoside 5'-triphosphate = RNA(n+1) + diphosphate. Its function is as follows. Promotes RNA polymerase assembly. Latches the N- and C-terminal regions of the beta' subunit thereby facilitating its interaction with the beta and alpha subunits. In Shouchella clausii (strain KSM-K16) (Alkalihalobacillus clausii), this protein is DNA-directed RNA polymerase subunit omega.